A 432-amino-acid polypeptide reads, in one-letter code: Enolase (432 aa).

Residue glutamine 163 coordinates (2R)-2-phosphoglycerate. The Proton donor role is filled by glutamate 205. Mg(2+)-binding residues include aspartate 242, glutamate 285, and aspartate 312. The (2R)-2-phosphoglycerate site is built by lysine 337, arginine 366, serine 367, and lysine 388. Lysine 337 serves as the catalytic Proton acceptor.

This sequence belongs to the enolase family. It depends on Mg(2+) as a cofactor.

Its subcellular location is the cytoplasm. The protein localises to the secreted. The protein resides in the cell surface. The catalysed reaction is (2R)-2-phosphoglycerate = phosphoenolpyruvate + H2O. It participates in carbohydrate degradation; glycolysis; pyruvate from D-glyceraldehyde 3-phosphate: step 4/5. In terms of biological role, catalyzes the reversible conversion of 2-phosphoglycerate (2-PG) into phosphoenolpyruvate (PEP). It is essential for the degradation of carbohydrates via glycolysis. This chain is Enolase, found in Bifidobacterium adolescentis (strain ATCC 15703 / DSM 20083 / NCTC 11814 / E194a).